We begin with the raw amino-acid sequence, 388 residues long: MNLHEYQAKELLAKYGLPVQQGILASNADEAAAAFDQLGGKFAVVKAQVHAGGRGKAGGVKVVKSREEAADVAATLIGKNLVTYQTDANGQPVNSVLVCEDMYPVERELYLGAVVDRSTRRVTFMASTEGGVEIEEVAHNTPEKILKVTVDPLVGLLPFQAREVAFALGLKDKQVNEFVKLMTGAYRAFVENDFALFEINPLAVRANGALACVDAKVGIDSNALYRLPAVAALRDKSQENERELKASEFDLNYVALEGNIGCMVNGAGLAMATMDIIKLKGGQPANFLDVGGGATKERVVEAFKLILADPSVKGVLINIFGGIVRCDMIAEAIIAAVKEVNVTVPVVVRLEGNNAELGARLLEESGLKLTSAQGLNDAAEKIVAAVGA.

Residues 9-245 form the ATP-grasp domain; sequence KELLAKYGLP…KSQENERELK (237 aa). Residues Lys46, 53 to 55, Glu100, Tyr103, and Glu108 contribute to the ATP site; that span reads GRG. 2 residues coordinate Mg(2+): Asn200 and Asp214. Substrate contacts are provided by residues Asn265 and 322 to 324; that span reads GIV.

The protein belongs to the succinate/malate CoA ligase beta subunit family. In terms of assembly, heterotetramer of two alpha and two beta subunits. Mg(2+) serves as cofactor.

The enzyme catalyses succinate + ATP + CoA = succinyl-CoA + ADP + phosphate. It catalyses the reaction GTP + succinate + CoA = succinyl-CoA + GDP + phosphate. Its pathway is carbohydrate metabolism; tricarboxylic acid cycle; succinate from succinyl-CoA (ligase route): step 1/1. In terms of biological role, succinyl-CoA synthetase functions in the citric acid cycle (TCA), coupling the hydrolysis of succinyl-CoA to the synthesis of either ATP or GTP and thus represents the only step of substrate-level phosphorylation in the TCA. The beta subunit provides nucleotide specificity of the enzyme and binds the substrate succinate, while the binding sites for coenzyme A and phosphate are found in the alpha subunit. The sequence is that of Succinate--CoA ligase [ADP-forming] subunit beta from Laribacter hongkongensis (strain HLHK9).